We begin with the raw amino-acid sequence, 476 residues long: Aspartyl/glutamyl-tRNA(Asn/Gln) amidotransferase subunit B (476 aa).

This sequence belongs to the GatB/GatE family. GatB subfamily. Heterotrimer of A, B and C subunits.

The catalysed reaction is L-glutamyl-tRNA(Gln) + L-glutamine + ATP + H2O = L-glutaminyl-tRNA(Gln) + L-glutamate + ADP + phosphate + H(+). The enzyme catalyses L-aspartyl-tRNA(Asn) + L-glutamine + ATP + H2O = L-asparaginyl-tRNA(Asn) + L-glutamate + ADP + phosphate + 2 H(+). Its function is as follows. Allows the formation of correctly charged Asn-tRNA(Asn) or Gln-tRNA(Gln) through the transamidation of misacylated Asp-tRNA(Asn) or Glu-tRNA(Gln) in organisms which lack either or both of asparaginyl-tRNA or glutaminyl-tRNA synthetases. The reaction takes place in the presence of glutamine and ATP through an activated phospho-Asp-tRNA(Asn) or phospho-Glu-tRNA(Gln). This is Aspartyl/glutamyl-tRNA(Asn/Gln) amidotransferase subunit B from Geobacillus kaustophilus (strain HTA426).